We begin with the raw amino-acid sequence, 215 residues long: 3-isopropylmalate dehydratase small subunit (215 aa).

Belongs to the LeuD family. LeuD type 1 subfamily. Heterodimer of LeuC and LeuD.

The catalysed reaction is (2R,3S)-3-isopropylmalate = (2S)-2-isopropylmalate. It participates in amino-acid biosynthesis; L-leucine biosynthesis; L-leucine from 3-methyl-2-oxobutanoate: step 2/4. Functionally, catalyzes the isomerization between 2-isopropylmalate and 3-isopropylmalate, via the formation of 2-isopropylmaleate. This chain is 3-isopropylmalate dehydratase small subunit, found in Saccharophagus degradans (strain 2-40 / ATCC 43961 / DSM 17024).